The following is a 518-amino-acid chain: Glutamate--cysteine ligase (518 aa).

The protein belongs to the glutamate--cysteine ligase type 1 family. Type 1 subfamily.

The catalysed reaction is L-cysteine + L-glutamate + ATP = gamma-L-glutamyl-L-cysteine + ADP + phosphate + H(+). It functions in the pathway sulfur metabolism; glutathione biosynthesis; glutathione from L-cysteine and L-glutamate: step 1/2. The polypeptide is Glutamate--cysteine ligase (Shigella flexneri serotype 5b (strain 8401)).